The following is a 647-amino-acid chain: Protein arginine N-methyltransferase 7 (647 aa).

2 SAM-dependent MTase PRMT-type domains span residues 12–332 (EREW…FSLW) and 337–647 (GKDK…SEDS). Catalysis depends on residues Glu140 and Glu149.

It belongs to the class I-like SAM-binding methyltransferase superfamily. Protein arginine N-methyltransferase family. PRMT7 subfamily.

Its function is as follows. Arginine methyltransferase that can both catalyze the formation of omega-N monomethylarginine (MMA) and symmetrical dimethylarginine (sDMA). In Caenorhabditis elegans, this protein is Protein arginine N-methyltransferase 7 (prmt-7).